We begin with the raw amino-acid sequence, 353 residues long: Fasciclin-like arabinogalactan protein 21 (353 aa).

A signal peptide spans 1–28 (MGCCSSDCFVYFILSIALAFMAISTTLR). N-linked (GlcNAc...) asparagine glycosylation is found at N51, N81, N94, N200, N249, and N315. One can recognise an FAS1 1 domain in the interval 83–181 (TLFAIEDASF…HGVIGPFSPL (99 aa)). The FAS1 2 domain maps to 254 to 352 (TILATPNLVS…GISHTLEIPH (99 aa)).

Belongs to the fasciclin-like AGP family.

The protein resides in the secreted. May be a cell surface adhesion protein. The chain is Fasciclin-like arabinogalactan protein 21 (FLA21) from Arabidopsis thaliana (Mouse-ear cress).